A 393-amino-acid chain; its full sequence is NAD(P)H-quinone oxidoreductase subunit H, chloroplastic (393 aa).

The protein belongs to the complex I 49 kDa subunit family. As to quaternary structure, NDH is composed of at least 16 different subunits, 5 of which are encoded in the nucleus.

Its subcellular location is the plastid. It localises to the chloroplast thylakoid membrane. The enzyme catalyses a plastoquinone + NADH + (n+1) H(+)(in) = a plastoquinol + NAD(+) + n H(+)(out). The catalysed reaction is a plastoquinone + NADPH + (n+1) H(+)(in) = a plastoquinol + NADP(+) + n H(+)(out). Its function is as follows. NDH shuttles electrons from NAD(P)H:plastoquinone, via FMN and iron-sulfur (Fe-S) centers, to quinones in the photosynthetic chain and possibly in a chloroplast respiratory chain. The immediate electron acceptor for the enzyme in this species is believed to be plastoquinone. Couples the redox reaction to proton translocation, and thus conserves the redox energy in a proton gradient. The sequence is that of NAD(P)H-quinone oxidoreductase subunit H, chloroplastic from Agrostis stolonifera (Creeping bentgrass).